Consider the following 141-residue polypeptide: ATP synthase epsilon chain 1 (141 aa).

Belongs to the ATPase epsilon chain family. F-type ATPases have 2 components, CF(1) - the catalytic core - and CF(0) - the membrane proton channel. CF(1) has five subunits: alpha(3), beta(3), gamma(1), delta(1), epsilon(1). CF(0) has three main subunits: a, b and c.

Its subcellular location is the cell inner membrane. Its function is as follows. Produces ATP from ADP in the presence of a proton gradient across the membrane. The polypeptide is ATP synthase epsilon chain 1 (Paraburkholderia xenovorans (strain LB400)).